A 277-amino-acid polypeptide reads, in one-letter code: Shikimate dehydrogenase (NADP(+)) (277 aa).

Shikimate is bound by residues Ser-15–Ser-17 and Thr-62. The Proton acceptor role is filled by Lys-66. Shikimate-binding residues include Asn-87 and Asp-102. Residues Gly-127–Ala-131, Asn-151–Lys-156, and Ile-219 each bind NADP(+). Tyr-221 lines the shikimate pocket. Gly-242 lines the NADP(+) pocket.

This sequence belongs to the shikimate dehydrogenase family. Homodimer.

The enzyme catalyses shikimate + NADP(+) = 3-dehydroshikimate + NADPH + H(+). Its pathway is metabolic intermediate biosynthesis; chorismate biosynthesis; chorismate from D-erythrose 4-phosphate and phosphoenolpyruvate: step 4/7. Involved in the biosynthesis of the chorismate, which leads to the biosynthesis of aromatic amino acids. Catalyzes the reversible NADPH linked reduction of 3-dehydroshikimate (DHSA) to yield shikimate (SA). This is Shikimate dehydrogenase (NADP(+)) from Geobacillus sp. (strain WCH70).